The primary structure comprises 505 residues: Protein disulfide-isomerase A3 (505 aa).

The first 24 residues, Met-1–Ala-24, serve as a signal peptide directing secretion. Residues Ser-25–Gly-133 form the Thioredoxin 1 domain. Active-site nucleophile residues include Cys-57 and Cys-60. Cys-57 and Cys-60 form a disulfide bridge. Position 61 is an N6-methyllysine (Lys-61). A disulfide bond links Cys-85 and Cys-92. N6-succinyllysine is present on Lys-129. At Lys-152 the chain carries N6-acetyllysine. Position 218 is an N6-succinyllysine (Lys-218). At Lys-252 the chain carries N6-acetyllysine. Thr-319 carries the post-translational modification Phosphothreonine. The Thioredoxin 2 domain occupies Ser-343–Thr-485. Residue Lys-362 is modified to N6-acetyllysine. Residues Cys-406 and Cys-409 each act as nucleophile in the active site. Cys-406 and Cys-409 form a disulfide bridge. Residues Ala-484–Leu-505 are disordered. A compositionally biased stretch (basic and acidic residues) spans Gln-491–Leu-505. An N6-acetyllysine modification is found at Lys-494. Residues Gln-502–Leu-505 carry the Prevents secretion from ER motif.

It belongs to the protein disulfide isomerase family. In terms of assembly, part of the major histocompatibility complex class I (MHC I) peptide loading complex composed of TAP1, TAP2, B2M, MHC heavy chain, TAPBP, PDIA3, and CALR. Interacts with ERP27 and CANX. Interacts with SERPINA2 and with SERPINA1. Interacts with ATP2A2. In terms of processing, within the major histocompatibility complex class I (MHC I) peptide loading complex forms reversible disulfide-linked heterodimers with TAPBP as part of its protein folding chaperone activity. This is essential to assist the dynamic assembly of the MHC I complex with high affinity antigens in the endoplasmic reticulum. Post-translationally, phosphorylated. As to expression, in caput epididymal spermatozoa, detected in the head, mid and principal pieces. In cauda epididymal spermatozoa detected only in the acrosome (at protein level).

It localises to the endoplasmic reticulum. The protein localises to the endoplasmic reticulum lumen. It is found in the melanosome. It catalyses the reaction Catalyzes the rearrangement of -S-S- bonds in proteins.. Its activity is regulated as follows. Seems to be inhibited by acidic phospholipids. In terms of biological role, protein disulfide isomerase that catalyzes the formation, isomerization, and reduction or oxidation of disulfide bonds in client proteins and functions as a protein folding chaperone. Core component of the major histocompatibility complex class I (MHC I) peptide loading complex where it functions as an essential folding chaperone for TAPBP. Through TAPBP, assists the dynamic assembly of the MHC I complex with high affinity antigens in the endoplasmic reticulum. Therefore, plays a crucial role in the presentation of antigens to cytotoxic T cells in adaptive immunity. The polypeptide is Protein disulfide-isomerase A3 (Pdia3) (Rattus norvegicus (Rat)).